A 418-amino-acid chain; its full sequence is Alditol oxidase (418 aa).

The region spanning 13–179 (ITYTAKELLR…TSLTLDLEPA (167 aa)) is the FAD-binding PCMH-type domain. FAD contacts are provided by residues 41–47 (VLGSGHS), Ser-106, Ser-111, Gly-114, 118–121 (TGTH), and Val-169. Pros-8alpha-FAD histidine is present on His-46. Ser-106 provides a ligand contact to D-sorbitol. Ser-106 is a binding site for xylitol. 3 residues coordinate D-sorbitol: Glu-320, Arg-322, and Thr-345. 3 residues coordinate xylitol: Glu-320, Arg-322, and Thr-345. Arg-322 serves as a coordination point for FAD. His-372 serves as a coordination point for FAD. D-sorbitol is bound at residue Lys-375. Position 375 (Lys-375) interacts with xylitol.

The protein belongs to the oxygen-dependent FAD-linked oxidoreductase family. As to quaternary structure, monomer. Requires FAD as cofactor.

The enzyme catalyses an alditol + O2 = an aldose + H2O2. It carries out the reaction xylitol + O2 = D-xylose + H2O2. It catalyses the reaction D-sorbitol + O2 = D-glucose + H2O2. In terms of biological role, oxidase that performs selective oxidation of the terminal primary hydroxyl group of several alditols, with a reduction of O2 to H2O2. Shows highest activity on xylitol and D-sorbitol, and a poor efficiency with D-mannitol and L-threitol. The polypeptide is Alditol oxidase (xyoA) (Streptomyces coelicolor (strain ATCC BAA-471 / A3(2) / M145)).